The sequence spans 275 residues: Uroporphyrinogen-III synthase (275 aa).

This sequence belongs to the uroporphyrinogen-III synthase family.

The enzyme catalyses hydroxymethylbilane = uroporphyrinogen III + H2O. It functions in the pathway porphyrin-containing compound metabolism; protoporphyrin-IX biosynthesis; coproporphyrinogen-III from 5-aminolevulinate: step 3/4. Catalyzes cyclization of the linear tetrapyrrole, hydroxymethylbilane, to the macrocyclic uroporphyrinogen III, the fourth step in the heme biosynthetic pathway. The protein is Uroporphyrinogen-III synthase of Saccharomyces cerevisiae (strain ATCC 204508 / S288c) (Baker's yeast).